We begin with the raw amino-acid sequence, 538 residues long: Carboxypeptidase 2 (538 aa).

Positions 1–21 are cleaved as a signal peptide; sequence MVAYRFLTLISLGLGSHCASA. The N-linked (GlcNAc...) asparagine glycan is linked to N46. A disordered region spans residues 53-76; that stretch reads PAFTSPGTVPRGFSDGTSGPTRDE. In terms of domain architecture, Peptidase M14 spans 71-351; sequence GPTRDETMEG…VMVKSILQTA (281 aa). Zn(2+) contacts are provided by H136, E139, and H224. Residue E322 is the Proton donor/acceptor of the active site. N-linked (GlcNAc...) asparagine glycans are attached at residues N393 and N459.

This sequence belongs to the peptidase M14 family. Zn(2+) serves as cofactor.

It localises to the secreted. In terms of biological role, extracellular metalloprotease that contributes to pathogenicity. In Trichophyton equinum (Horse ringworm fungus), this protein is Carboxypeptidase 2 (MCPB).